We begin with the raw amino-acid sequence, 598 residues long: UvrABC system protein C (598 aa).

Residues 14–91 (DQPGCYLMKD…IHKNNPKYNI (78 aa)) form the GIY-YIG domain. The region spanning 196–231 (TEIQDRLQEKMAYAAAHMEFEKAAEFRDQIKAIETV) is the UVR domain.

The protein belongs to the UvrC family. Interacts with UvrB in an incision complex.

It is found in the cytoplasm. The UvrABC repair system catalyzes the recognition and processing of DNA lesions. UvrC both incises the 5' and 3' sides of the lesion. The N-terminal half is responsible for the 3' incision and the C-terminal half is responsible for the 5' incision. The chain is UvrABC system protein C from Enterococcus faecalis (strain ATCC 700802 / V583).